Reading from the N-terminus, the 372-residue chain is Innexin shaking-B (372 aa).

Residues M1–S21 lie on the Cytoplasmic side of the membrane. The helical transmembrane segment at I22–I42 threads the bilayer. The Extracellular portion of the chain corresponds to T43–Y110. A helical transmembrane segment spans residues Q111–W131. At K132 to Y182 the chain is on the cytoplasmic side. A helical transmembrane segment spans residues V183–F203. Topologically, residues D204–K267 are extracellular. The chain crosses the membrane as a helical span at residues I268–I288. Residues Y289–A372 lie on the Cytoplasmic side of the membrane.

It belongs to the pannexin family. In terms of assembly, monomer (isoform Lethal). As to expression, isoform Neural is expressed in synapses of giant fibers (GF), in a large thoracic cell in location of postsynaptic target and optic lobe lamina and medulla. Isoform Lethal is expressed in embryonic mesodermal derivatives. During metamorphosis, both isoforms are dynamically expressed in pupal nervous system.

The protein resides in the cell membrane. The protein localises to the cell junction. Its subcellular location is the gap junction. Structural component of the gap junctions at electrical synapses in distal and mid-depth levels in the lamina. Isoform Lethal forms voltage sensitive intercellular channels through homotypic interactions. This is Innexin shaking-B (shakB) from Drosophila melanogaster (Fruit fly).